A 476-amino-acid polypeptide reads, in one-letter code: Glucose-1-phosphate adenylyltransferase (476 aa).

Alpha-D-glucose 1-phosphate is bound by residues Tyr-114, Gly-179, 194–195 (EK), and Ser-212.

The protein belongs to the bacterial/plant glucose-1-phosphate adenylyltransferase family. In terms of assembly, homotetramer.

The enzyme catalyses alpha-D-glucose 1-phosphate + ATP + H(+) = ADP-alpha-D-glucose + diphosphate. The protein operates within glycan biosynthesis; glycogen biosynthesis. Involved in the biosynthesis of ADP-glucose, a building block required for the elongation reactions to produce glycogen. Catalyzes the reaction between ATP and alpha-D-glucose 1-phosphate (G1P) to produce pyrophosphate and ADP-Glc. The protein is Glucose-1-phosphate adenylyltransferase of Yersinia pestis.